A 67-amino-acid polypeptide reads, in one-letter code: Neurotoxin Cex9 (67 aa).

Residues Lys1 to Gly65 form the LCN-type CS-alpha/beta domain. Cystine bridges form between Cys11–Cys64, Cys15–Cys40, Cys24–Cys45, and Cys28–Cys47. Cys64 carries the post-translational modification Cysteine amide. A propeptide spanning residues Gly65 to Lys67 is cleaved from the precursor.

It belongs to the long (4 C-C) scorpion toxin superfamily. Sodium channel inhibitor family. Beta subfamily. As to expression, expressed by the venom gland.

It localises to the secreted. Beta toxins bind voltage-independently at site-4 of sodium channels (Nav) and shift the voltage of activation toward more negative potentials thereby affecting sodium channel activation and promoting spontaneous and repetitive firing. The protein is Neurotoxin Cex9 of Centruroides exilicauda (Bark scorpion).